Here is an 859-residue protein sequence, read N- to C-terminus: Fanconi anemia group B protein (859 aa).

Residue Thr2 is modified to N-acetylthreonine.

In terms of assembly, belongs to the multisubunit FA complex composed of FANCA, FANCB, FANCC, FANCE, FANCF, FANCG, FANCL/PHF9 and FANCM. The complex is not found in FA patients.

The protein localises to the nucleus. Its function is as follows. DNA repair protein required for FANCD2 ubiquitination. The sequence is that of Fanconi anemia group B protein (FANCB) from Homo sapiens (Human).